The primary structure comprises 308 residues: Glycosyltransferase 6 domain-containing protein 1 (308 aa).

Topologically, residues 1-6 (MNSKRM) are cytoplasmic. The chain crosses the membrane as a helical; Signal-anchor for type II membrane protein span at residues 7 to 23 (LLLVLFAFSLMLVERYF). Over 24 to 308 (RNHQVEELRL…KVAHDSHRKL (285 aa)) the chain is Lumenal. Asn-74 carries an N-linked (GlcNAc...) asparagine glycan. Substrate contacts are provided by residues 82-87 (FATGRF), 173-175 (AVN), and 195-198 (HAWW). Glu-263 (nucleophile) is an active-site residue.

This sequence belongs to the glycosyltransferase 6 family. Mn(2+) serves as cofactor.

It is found in the membrane. This is Glycosyltransferase 6 domain-containing protein 1 (GLT6D1) from Macaca fascicularis (Crab-eating macaque).